Here is an 89-residue protein sequence, read N- to C-terminus: uncharacterized protein (89 aa).

Methionine 1 is a topological domain (cytoplasmic). Residues 2-22 (LFEIIYIVSSLFYIVSIIYTL) traverse the membrane as a helical segment. Residues 23-89 (MRIKHINTVA…ELKKSKLCEG (67 aa)) are Extracellular-facing.

The protein localises to the host membrane. This is an uncharacterized protein from Sulfolobus islandicus filamentous virus (isolate Iceland/Hveragerdi) (SIFV).